A 538-amino-acid polypeptide reads, in one-letter code: Atos homolog protein B (538 aa).

Disordered regions lie at residues 1–99 (MRHV…PSTV), 165–185 (QGGQ…QLHT), and 199–270 (KSPV…GTLG). Pro residues predominate over residues 227–238 (HTPPGPGPPGPC). Phosphoserine is present on residues serine 254 and serine 255. The tract at residues 348–430 (LLGNFEESLL…VPKVGTIQVT (83 aa)) is required for macropage invasion. The segment at 436-444 (QTVVKMFLV) is transactivation domain 1 (TAD1).

Belongs to the ATOS family.

The protein resides in the nucleus. In terms of biological role, transcription regulator that syncronizes transcriptional and translational programs to promote macrophage invasion of tissues. This chain is Atos homolog protein B, found in Mus musculus (Mouse).